Here is a 312-residue protein sequence, read N- to C-terminus: Malate dehydrogenase (312 aa).

Residues 7–13 (GAAGGIG) and D34 each bind NAD(+). R81 and R87 together coordinate substrate. NAD(+) is bound by residues N94 and 117–119 (ITN). The substrate site is built by N119 and R153. The active-site Proton acceptor is the H177. An NAD(+)-binding site is contributed by M227.

The protein belongs to the LDH/MDH superfamily. MDH type 1 family. Homodimer.

The enzyme catalyses (S)-malate + NAD(+) = oxaloacetate + NADH + H(+). Catalyzes the reversible oxidation of malate to oxaloacetate. The protein is Malate dehydrogenase of Escherichia coli O139:H28 (strain E24377A / ETEC).